A 264-amino-acid chain; its full sequence is Accessory gland-specific peptide 26Aa (264 aa).

The first 18 residues, 1–18 (MNQILLCSPILLLLFTVA), serve as a signal peptide directing secretion. Positions 1–138 (MNQILLCSPI…LQQRLLTEQN (138 aa)) are sufficient for promoting ovulation when expressed in females. Residues asparagine 88, asparagine 122, asparagine 138, and asparagine 145 are each glycosylated (N-linked (GlcNAc...) asparagine). A disordered region spans residues 189 to 219 (LQNTRKSTKPCKKRSSKDSAPPAANQFQEAN). Residues 194 to 203 (KSTKPCKKRS) show a composition bias toward basic residues. A necessary and sufficient for homodimerization region spans residues 219–264 (NVRNTYRNKYLTLLKELSQKINNEIAKVATDVPTETNPSQGNLPTL).

As to quaternary structure, homodimer. In terms of assembly, may form a homodimer. In terms of processing, glycosylation. Undergoes several cleavages as it is secreted and is further processed in the recipient female. The precursor molecule is proteolytically cleaved by the seminal metalloprotease Semp1 at Lys-48 to produce CP1-N and CP1-C. Post-translationally, cleaved at Lys-67 by Semp1 to generate CP2-N and CP2-C. Cleavage appears to take place in the mated female genital tract. In terms of processing, cleaved at Lys-117 by Semp1 to generate CP3-N and CP3-C. Cleavage appears to take place in the mated female genital tract. Produced in the male accessory glands and secreted into seminal fluid (at protein level). Detected in the main cells and secondary cells of the accessory glands of 1 day old males (at protein level). In 5 day old males, confined to the secondary cells and only reappears in the main cells after mating (at protein level). Produced in adult males 3-4 hr after eclosion, levels increase reaching a peak at day 3-5 which is maintained until at least day 10 of adulthood (at protein level). In unmated male adults, levels are maintained for the first 6 days of adulthood and then gradually decrease for at least the next 8 days. In mated females, detected in the genital tract 3 minutes after the start of mating (ASM) and is secreted into the female hemolymph via the posterior vaginal wall 5 minutes ASM (at protein level).

Its subcellular location is the secreted. The protein localises to the cytoplasm. Male seminal protein which enhances ovulation in female Drosophila by stimulating the release of oocytes by the ovary following mating. Acts by increasing octopamine (OA) neuronal signaling in the female genital tract leading to the postmating relaxation of the oviduct muscles. This activation of the OA signaling pathway is likely to indirectly contribute to the mating-dependent increase in the number of OA synaptic sites in the female reproductive tract. Functionally, male seminal peptide which is able to enhance ovulation in female Drosophila. This is Accessory gland-specific peptide 26Aa from Drosophila melanogaster (Fruit fly).